The primary structure comprises 224 residues: Endoplasmic reticulum vesicle protein 25 (224 aa).

Residues 1–25 (MIPPRSLGSTAALLLVLLFTTLASA) form the signal peptide. At 26–190 (IKFDLPSNAH…ADTNLSTNMR (165 aa)) the chain is on the lumenal side. The GOLD domain maps to 38-131 (TKCIWNYALS…IPVVTIDLDV (94 aa)). Residues 191–211 (VTNFAILTLIALIALGVWQVF) traverse the membrane as a helical segment. The Cytoplasmic portion of the chain corresponds to 212–224 (HLRGFFKRKYLID).

The protein belongs to the EMP24/GP25L family.

It is found in the endoplasmic reticulum membrane. The protein resides in the golgi apparatus membrane. Its function is as follows. Constituent of COPII-coated endoplasmic reticulum-derived transport vesicles. Required for efficient transport of a subset of secretory proteins to the Golgi. Facilitates retrograde transport from the Golgi to the endoplasmic reticulum. The protein is Endoplasmic reticulum vesicle protein 25 (ERV25) of Mycosarcoma maydis (Corn smut fungus).